The primary structure comprises 722 residues: Polyribonucleotide nucleotidyltransferase (722 aa).

Mg(2+) is bound by residues Asp495 and Asp501. In terms of domain architecture, KH spans 561-620 (PRLYVMKINPEKIREVIGKGGETIRSITKDTGCEINIEEDGTITIASVSSEGAEAAKKRI). One can recognise an S1 motif domain in the interval 630–700 (GKVYEGTVVK…DRGRIRLSIK (71 aa)).

It belongs to the polyribonucleotide nucleotidyltransferase family. Mg(2+) is required as a cofactor.

Its subcellular location is the cytoplasm. The catalysed reaction is RNA(n+1) + phosphate = RNA(n) + a ribonucleoside 5'-diphosphate. In terms of biological role, involved in mRNA degradation. Catalyzes the phosphorolysis of single-stranded polyribonucleotides processively in the 3'- to 5'-direction. The polypeptide is Polyribonucleotide nucleotidyltransferase (Chromobacterium violaceum (strain ATCC 12472 / DSM 30191 / JCM 1249 / CCUG 213 / NBRC 12614 / NCIMB 9131 / NCTC 9757 / MK)).